A 1453-amino-acid polypeptide reads, in one-letter code: DNA-directed RNA polymerase IV subunit 1 (1453 aa).

Residues Cys-56, Cys-59, Cys-67, His-70, Cys-97, Cys-100, and Cys-121 each contribute to the Zn(2+) site. Mg(2+)-binding residues include Asp-447, Asp-449, and Asp-451. The segment at 806–818 is bridging helix; that stretch reads PLESFVHSVTSRD.

The protein belongs to the RNA polymerase beta' chain family. Component of the RNA polymerase IV complex. Interacts with NRPD2, NRPD3, NRPD3B, NRPD4, NRPD5, NRPD5B, NRPD6A, NRPD7, NRPD7B, NRPD9A, NRPD9B, NRPD10, NRPD11, NRPD12, RDR2, RDM4, CLSY1, CLSY2, CLSY3, CLSY4 and SHH1. Mostly expressed in flowers, and, to a lower extent, in leaves.

It localises to the nucleus. It carries out the reaction RNA(n) + a ribonucleoside 5'-triphosphate = RNA(n+1) + diphosphate. In terms of biological role, DNA-dependent RNA polymerase catalyzes the transcription of DNA into RNA using the four ribonucleoside triphosphates as substrates. Largest and catalytic component of RNA polymerase IV which mediates 24-nt short-interfering RNAs (siRNA) accumulation. Implicated in siRNA-directed heterochromatin formation through the action of DCL3 and AGO4, and subsequent DNA methylation-dependent silencing of targeted sequences. Essential component of a self-reinforcing loop coupling de novo DNA methylation to siRNA production. Required for intercellular but not intracellular RNA interference (RNAi) leading to systemic post-transcriptional gene silencing. Involved in the maintenance of post-transcriptional RNA silencing. This is DNA-directed RNA polymerase IV subunit 1 (NRPD1) from Arabidopsis thaliana (Mouse-ear cress).